The sequence spans 272 residues: Probable ribosomal RNA small subunit methyltransferase A (272 aa).

S-adenosyl-L-methionine contacts are provided by N23, L25, G50, E71, D95, and N110.

Belongs to the class I-like SAM-binding methyltransferase superfamily. rRNA adenine N(6)-methyltransferase family. RsmA subfamily.

It localises to the cytoplasm. Specifically dimethylates two adjacent adenosines in the loop of a conserved hairpin near the 3'-end of 16S rRNA in the 30S particle. May play a critical role in biogenesis of 30S subunits. The sequence is that of Probable ribosomal RNA small subunit methyltransferase A from Thermococcus onnurineus (strain NA1).